A 244-amino-acid polypeptide reads, in one-letter code: Adenosine 5'-phosphosulfate reductase (244 aa).

[4Fe-4S] cluster contacts are provided by Cys129, Cys130, Cys212, and Cys215. Cys240 serves as the catalytic Nucleophile; cysteine thiosulfonate intermediate.

This sequence belongs to the PAPS reductase family. CysH subfamily. The cofactor is [4Fe-4S] cluster.

It localises to the cytoplasm. It catalyses the reaction [thioredoxin]-disulfide + sulfite + AMP + 2 H(+) = adenosine 5'-phosphosulfate + [thioredoxin]-dithiol. It participates in sulfur metabolism; hydrogen sulfide biosynthesis; sulfite from sulfate. Functionally, catalyzes the formation of sulfite from adenosine 5'-phosphosulfate (APS) using thioredoxin as an electron donor. This chain is Adenosine 5'-phosphosulfate reductase, found in Neisseria meningitidis serogroup A / serotype 4A (strain DSM 15465 / Z2491).